The sequence spans 92 residues: Ezrin (92 aa).

The FERM domain occupies 1–72; sequence QLFDQVVKGF…PDFVFYAPRR (72 aa). Position 15 is an N6-acetyllysine (lysine 15). An interaction with SCYL3 region spans residues 42-92; sequence EIRNISFNDKKFVIKPIDKKAPDFVFYAPRRKPDTIEVQQMKLQDFEQKTK.

In terms of assembly, interacts with PALS1 and NHERF2. Found in a complex with EZR, PODXL and NHERF2. Interacts with MCC, PLEKHG6, PODXL, SCYL3/PACE1, NHERF1 and TMEM8B. Interacts (when phosphorylated) with FES/FPS. Interacts with dimeric S100P, the interaction may be activating through unmasking of F-actin binding sites. Identified in complexes that contain VIM, EZR, AHNAK, BFSP1, BFSP2, ANK2, PLEC, PRX and spectrin. Detected in a complex composed of at least EZR, AHNAK, PPL and PRX. Interacts with PDPN (via cytoplasmic domain); activates RHOA and promotes epithelial-mesenchymal transition. Interacts with SPN/CD43 cytoplasmic tail, CD44 and ICAM2. Interacts with CLIC5; may work together in a complex which also includes RDX and MYO6 to stabilize linkages between the plasma membrane and subjacent actin cytoskeleton at the base of stereocilia. In terms of processing, phosphorylated by tyrosine-protein kinases. Phosphorylation by ROCK2 suppresses the head-to-tail association of the N-terminal and C-terminal halves resulting in an opened conformation which is capable of actin and membrane-binding. Post-translationally, S-nitrosylation is induced by interferon-gamma and oxidatively-modified low-densitity lipoprotein (LDL(ox)) possibly implicating the iNOS-S100A8/9 transnitrosylase complex.

The protein localises to the apical cell membrane. The protein resides in the cell projection. It is found in the microvillus membrane. It localises to the ruffle membrane. Its subcellular location is the cytoplasm. The protein localises to the cell cortex. The protein resides in the cytoskeleton. It is found in the microvillus. With respect to regulation, a head-to-tail association, of the N-terminal and C-terminal halves results in a closed conformation (inactive form) which is incapable of actin or membrane-binding. Functionally, probably involved in connections of major cytoskeletal structures to the plasma membrane. In epithelial cells, required for the formation of microvilli and membrane ruffles on the apical pole. Along with PLEKHG6, required for normal macropinocytosis. This is Ezrin from Mesocricetus auratus (Golden hamster).